The chain runs to 532 residues: Probable bifunctional tRNA threonylcarbamoyladenosine biosynthesis protein (532 aa).

Residues 1 to 323 (MRVLGVEGTA…FRPDEVSVTW (323 aa)) are kae1. The Fe cation site is built by His-107 and His-111. L-threonylcarbamoyladenylate-binding positions include 128–132 (NASGA), Asp-160, Gly-173, Glu-177, and Asn-256. Asp-284 is a binding site for Fe cation. Residues 329 to 532 (PARDPGADAV…GRYQDDPETA (204 aa)) enclose the Protein kinase domain. Residues 338-346 (VRQGAEATV) and Lys-355 contribute to the ATP site. Asp-444 (proton acceptor; for kinase activity) is an active-site residue.

This sequence in the N-terminal section; belongs to the KAE1 / TsaD family. The protein in the C-terminal section; belongs to the protein kinase superfamily. Tyr protein kinase family. BUD32 subfamily. Component of the KEOPS complex that consists of Kae1, Bud32, Cgi121 and Pcc1; the whole complex dimerizes. It depends on Fe(2+) as a cofactor.

The protein resides in the cytoplasm. It carries out the reaction L-seryl-[protein] + ATP = O-phospho-L-seryl-[protein] + ADP + H(+). It catalyses the reaction L-threonyl-[protein] + ATP = O-phospho-L-threonyl-[protein] + ADP + H(+). The catalysed reaction is L-threonylcarbamoyladenylate + adenosine(37) in tRNA = N(6)-L-threonylcarbamoyladenosine(37) in tRNA + AMP + H(+). Required for the formation of a threonylcarbamoyl group on adenosine at position 37 (t(6)A37) in tRNAs that read codons beginning with adenine. Is a component of the KEOPS complex that is probably involved in the transfer of the threonylcarbamoyl moiety of threonylcarbamoyl-AMP (TC-AMP) to the N6 group of A37. The Kae1 domain likely plays a direct catalytic role in this reaction. The Bud32 domain probably displays kinase activity that regulates Kae1 function. The chain is Probable bifunctional tRNA threonylcarbamoyladenosine biosynthesis protein from Halobacterium salinarum (strain ATCC 700922 / JCM 11081 / NRC-1) (Halobacterium halobium).